Reading from the N-terminus, the 319-residue chain is HTH-type transcriptional regulator YidZ (319 aa).

Residues 8-65 enclose the HTH lysR-type domain; sequence LDLNLLLCLQLLMQERSVTKAAKRMNVTPSAVSKSLAKLRAWFDDPLFVNSPLGLSPT. Residues 25-44 constitute a DNA-binding region (H-T-H motif); it reads VTKAAKRMNVTPSAVSKSLA.

This sequence belongs to the LysR transcriptional regulatory family.

Functionally, involved in anaerobic NO protection. In Escherichia coli O17:K52:H18 (strain UMN026 / ExPEC), this protein is HTH-type transcriptional regulator YidZ.